The following is a 396-amino-acid chain: Adenosine 3'-phospho 5'-phosphosulfate transporter 2 (396 aa).

The disordered stretch occupies residues 22 to 42; the sequence is NGGESAGNSPPSQRKSSTSES. A compositionally biased stretch (polar residues) spans 27–42; sequence AGNSPPSQRKSSTSES. 2 positions are modified to phosphoserine: serine 37 and serine 40. N-linked (GlcNAc...) asparagine glycosylation occurs at asparagine 57. Transmembrane regions (helical) follow at residues 66 to 86, 91 to 111, 140 to 160, 163 to 183, 189 to 209, 216 to 236, 253 to 273, 290 to 310, 318 to 338, and 342 to 362; these read CAGV…IFTV, PYGW…GLVE, LILA…LGYL, PTQV…SILI, GLLD…FTLA, NFNL…AAIG, VVFY…LVTG, FGYG…VLAL, IAAT…FVLF, and FTLQ…LNVY.

The protein belongs to the nucleotide-sugar transporter family. SLC35B subfamily.

The protein resides in the golgi apparatus membrane. Mediates the transport of adenosine 3'-phospho 5'-phosphosulfate (PAPS), from cytosol into Golgi. PAPS is a universal sulfuryl donor for sulfation events that take place in the Golgi. Essential for viability. Involved in glycosaminoglycan synthesis and the subsequent signaling. May be involved in hh and dpp signaling by controlling the sulfation of heparan sulfate (HS). This is Adenosine 3'-phospho 5'-phosphosulfate transporter 2 (Papst2) from Drosophila melanogaster (Fruit fly).